A 156-amino-acid polypeptide reads, in one-letter code: uncharacterized protein (156 aa).

Residues 10 to 156 (VAARTFPLAC…NDYVMVRELV (147 aa)) enclose the N-acetyltransferase domain.

Belongs to the acetyltransferase family.

This is an uncharacterized protein from Mycobacterium bovis (strain ATCC BAA-935 / AF2122/97).